Here is a 170-residue protein sequence, read N- to C-terminus: MIDFGFDKIALIGAVALIVIGPERLPKVARTVGHLMGKAQRYVADVKAEVNRSIELEELKKMKTDFEDAARNVEQSVSSEVNRTSSEMNQAWESLSSSDGNGGSSGSAAADSYHAGEPLSEPPPAYTHPRKNWRLKRGAMPQWYKQRHGVRAKAQSGAARVARFRPPRPL.

The helical transmembrane segment at 1–21 (MIDFGFDKIALIGAVALIVIG) threads the bilayer. The interval 69-170 (AARNVEQSVS…VARFRPPRPL (102 aa)) is disordered. Residues 73 to 93 (VEQSVSSEVNRTSSEMNQAWE) are compositionally biased toward polar residues. Residues 128-137 (HPRKNWRLKR) show a composition bias toward basic residues.

The protein belongs to the TatB family. As to quaternary structure, the Tat system comprises two distinct complexes: a TatABC complex, containing multiple copies of TatA, TatB and TatC subunits, and a separate TatA complex, containing only TatA subunits. Substrates initially bind to the TatABC complex, which probably triggers association of the separate TatA complex to form the active translocon.

It is found in the cell inner membrane. Functionally, part of the twin-arginine translocation (Tat) system that transports large folded proteins containing a characteristic twin-arginine motif in their signal peptide across membranes. Together with TatC, TatB is part of a receptor directly interacting with Tat signal peptides. TatB may form an oligomeric binding site that transiently accommodates folded Tat precursor proteins before their translocation. This chain is Sec-independent protein translocase protein TatB, found in Methylibium petroleiphilum (strain ATCC BAA-1232 / LMG 22953 / PM1).